Consider the following 434-residue polypeptide: Histidinol dehydrogenase (434 aa).

Residues Tyr130, Gln191, and Asn214 each coordinate NAD(+). 3 residues coordinate substrate: Ser237, Gln259, and His262. Gln259 and His262 together coordinate Zn(2+). Residues Glu327 and His328 each act as proton acceptor in the active site. Positions 328, 361, 415, and 420 each coordinate substrate. Residue Asp361 participates in Zn(2+) binding. Position 420 (His420) interacts with Zn(2+).

The protein belongs to the histidinol dehydrogenase family. Zn(2+) is required as a cofactor.

It carries out the reaction L-histidinol + 2 NAD(+) + H2O = L-histidine + 2 NADH + 3 H(+). It functions in the pathway amino-acid biosynthesis; L-histidine biosynthesis; L-histidine from 5-phospho-alpha-D-ribose 1-diphosphate: step 9/9. Catalyzes the sequential NAD-dependent oxidations of L-histidinol to L-histidinaldehyde and then to L-histidine. This is Histidinol dehydrogenase from Chromobacterium violaceum (strain ATCC 12472 / DSM 30191 / JCM 1249 / CCUG 213 / NBRC 12614 / NCIMB 9131 / NCTC 9757 / MK).